Reading from the N-terminus, the 323-residue chain is o-succinylbenzoate synthase (323 aa).

Lys-134 acts as the Proton donor in catalysis. Mg(2+) contacts are provided by Asp-162, Glu-191, and Asp-214. Lys-236 (proton acceptor) is an active-site residue.

Belongs to the mandelate racemase/muconate lactonizing enzyme family. MenC type 1 subfamily. The cofactor is a divalent metal cation.

The catalysed reaction is (1R,6R)-6-hydroxy-2-succinyl-cyclohexa-2,4-diene-1-carboxylate = 2-succinylbenzoate + H2O. The protein operates within quinol/quinone metabolism; 1,4-dihydroxy-2-naphthoate biosynthesis; 1,4-dihydroxy-2-naphthoate from chorismate: step 4/7. It participates in quinol/quinone metabolism; menaquinone biosynthesis. In terms of biological role, converts 2-succinyl-6-hydroxy-2,4-cyclohexadiene-1-carboxylate (SHCHC) to 2-succinylbenzoate (OSB). The polypeptide is o-succinylbenzoate synthase (Photorhabdus laumondii subsp. laumondii (strain DSM 15139 / CIP 105565 / TT01) (Photorhabdus luminescens subsp. laumondii)).